The sequence spans 330 residues: Aspartate--ammonia ligase (330 aa).

The protein belongs to the class-II aminoacyl-tRNA synthetase family. AsnA subfamily.

It is found in the cytoplasm. It catalyses the reaction L-aspartate + NH4(+) + ATP = L-asparagine + AMP + diphosphate + H(+). It functions in the pathway amino-acid biosynthesis; L-asparagine biosynthesis; L-asparagine from L-aspartate (ammonia route): step 1/1. In Cronobacter sakazakii (strain ATCC BAA-894) (Enterobacter sakazakii), this protein is Aspartate--ammonia ligase.